The chain runs to 203 residues: GTP-binding protein rho4 (203 aa).

A GTP-binding site is contributed by 21 to 28; sequence GDGGCGKT. The Effector region motif lies at 43 to 51; sequence YVPTVFENY. Residue 70-74 coordinates GTP; it reads DTAGQ. C200 is subject to Cysteine methyl ester. C200 is lipidated: S-geranylgeranyl cysteine. Positions 201–203 are cleaved as a propeptide — removed in mature form; it reads VIL.

It belongs to the small GTPase superfamily. Rho family.

It localises to the membrane. Its function is as follows. Required for cell separation. Involved in the regulation of the septum degradation during cytokinesis and in the organization of F-actin patches and cytoplasmic microtubules. This chain is GTP-binding protein rho4 (rho4), found in Schizosaccharomyces pombe (strain 972 / ATCC 24843) (Fission yeast).